Consider the following 141-residue polypeptide: Galactose-6-phosphate isomerase subunit LacA 1 (141 aa).

This sequence belongs to the LacAB/RpiB family. Heteromultimeric protein consisting of LacA and LacB.

The enzyme catalyses aldehydo-D-galactose 6-phosphate = keto-D-tagatose 6-phosphate. Its pathway is carbohydrate metabolism; D-galactose 6-phosphate degradation; D-tagatose 6-phosphate from D-galactose 6-phosphate: step 1/1. The sequence is that of Galactose-6-phosphate isomerase subunit LacA 1 from Streptococcus agalactiae serotype III (strain NEM316).